Here is a 282-residue protein sequence, read N- to C-terminus: Prohibitin-1 (282 aa).

An AIM motif is present at residues 106–109; it reads YQNL.

It belongs to the prohibitin family. As to quaternary structure, the mitochondrial prohibitin complex consists of two subunits (phb1 and phb2). The subunits assemble into a membrane-associated ring-shaped supercomplex of approximately 1 mDa.

It is found in the mitochondrion inner membrane. It localises to the cytoplasm. Its function is as follows. Prohibitin probably acts as a holdase/unfoldase for the stabilization of newly synthesized mitochondrial proteins. Involved in mitophagy; may act as an adapter for atg8 that supports mitophagosome assembly. Negatively regulates the proteolytic processing of atg32 via the i-AAA protease. Acts as a negative regulator of the m-AAA protease. In Schizosaccharomyces pombe (strain 972 / ATCC 24843) (Fission yeast), this protein is Prohibitin-1 (phb1).